Reading from the N-terminus, the 179-residue chain is FAD-dependent monooxygenase nscC (179 aa).

Residues 1–21 (MGKQQETILIIGAGISGLATS) form the signal peptide. FAD-binding residues include Glu35 and Ala46. Asn92 carries an N-linked (GlcNAc...) asparagine glycan. FAD is bound at residue Arg119. N-linked (GlcNAc...) asparagine glycosylation occurs at Asn170.

It belongs to the paxM FAD-dependent monooxygenase family. The cofactor is FAD.

The protein operates within secondary metabolite biosynthesis. Its function is as follows. FAD-dependent monooxygenase; part of the gene cluster that mediates the biosynthesis of neosartoricin B, a prenylated anthracenone that probably exhibits T-cell antiproliferative activity, suggestive of a physiological role as an immunosuppressive agent. The non-reducing polyketide synthase nscA probably synthesizes and cyclizes the decaketide backbone. The hydrolase nscB then mediates the product release through hydrolysis followed by spontaneous decarboxylation. The prenyltransferase nscD catalyzes the addition of the dimethylallyl group to the aromatic C5. The FAD-dependent monooxygenase nscC is then responsible for the stereospecific hydroxylation at C2. Neosartoricin B can be converted into two additional compounds neosartoricins C and D. Neosartoricin C is a spirocyclic compound that is cyclized through the attack of C3 hydroxyl on C14, followed by dehydration. On the other hand, neosartoricin D is a further cyclized compound in which attack of C2 on C14 in neosartoricin C results in the formation of the acetal-containing dioxabicyclo-octanone ring. Both of these compounds are novel and possibly represent related metabolites of the gene cluster. The protein is FAD-dependent monooxygenase nscC of Trichophyton equinum (strain ATCC MYA-4606 / CBS 127.97) (Horse ringworm fungus).